A 268-amino-acid chain; its full sequence is Indole-3-glycerol phosphate synthase (268 aa).

It belongs to the TrpC family.

The enzyme catalyses 1-(2-carboxyphenylamino)-1-deoxy-D-ribulose 5-phosphate + H(+) = (1S,2R)-1-C-(indol-3-yl)glycerol 3-phosphate + CO2 + H2O. It functions in the pathway amino-acid biosynthesis; L-tryptophan biosynthesis; L-tryptophan from chorismate: step 4/5. This is Indole-3-glycerol phosphate synthase from Micrococcus luteus (strain ATCC 4698 / DSM 20030 / JCM 1464 / CCM 169 / CCUG 5858 / IAM 1056 / NBRC 3333 / NCIMB 9278 / NCTC 2665 / VKM Ac-2230) (Micrococcus lysodeikticus).